The following is a 331-amino-acid chain: Nodulation protein D 2 (331 aa).

An HTH lysR-type domain is found at 6–63 (LDLNLLVALDALMTERSLTAAARKINLSQPAMSAAVARLRSYFRDELFAMRGRKLVPT). The segment at residues 23–42 (LTAAARKINLSQPAMSAAVA) is a DNA-binding region (H-T-H motif).

This sequence belongs to the LysR transcriptional regulatory family.

Functionally, nodD regulates the expression of the nodABCFE genes which encode other nodulation proteins. NodD is also a negative regulator of its own expression. Binds flavonoids as inducers. This is Nodulation protein D 2 (nodD2) from Bradyrhizobium elkanii.